Here is a 419-residue protein sequence, read N- to C-terminus: Creatine kinase S-type, mitochondrial (419 aa).

The transit peptide at 1 to 39 (MASTFSKLLTGRNASLLFATLGTSALTTGYLVNRQKVCA) directs the protein to the mitochondrion. A cardiolipin-binding region spans residues 40-64 (EARDQHKLFPPSADYPDLRKHNNCM). The 87-residue stretch at 46 to 132 (KLFPPSADYP…FDPVIKLRHN (87 aa)) folds into the Phosphagen kinase N-terminal domain. The Phosphagen kinase C-terminal domain occupies 159-401 (YVLSSRVRTG…NYLVDCEKKL (243 aa)). Residues 162–166 (SSRVR) and histidine 225 contribute to the ATP site. Tyrosine 255 carries the post-translational modification Phosphotyrosine. Residues arginine 270, arginine 326, 354-359 (RGTGGV), and aspartate 369 each bind ATP. Threonine 356 bears the Phosphothreonine mark.

It belongs to the ATP:guanido phosphotransferase family. In terms of assembly, exists as an octamer composed of four CKMT2 homodimers.

It is found in the mitochondrion inner membrane. The catalysed reaction is creatine + ATP = N-phosphocreatine + ADP + H(+). Its function is as follows. Reversibly catalyzes the transfer of phosphate between ATP and various phosphogens (e.g. creatine phosphate). Creatine kinase isoenzymes play a central role in energy transduction in tissues with large, fluctuating energy demands, such as skeletal muscle, heart, brain and spermatozoa. This Oryctolagus cuniculus (Rabbit) protein is Creatine kinase S-type, mitochondrial (CKMT2).